The primary structure comprises 31 residues: MEAFSYTLLMALAAVTLFFAVAFRDPPKFDK.

Residues 3–23 form a helical membrane-spanning segment; sequence AFSYTLLMALAAVTLFFAVAF.

Belongs to the PsbT family. In terms of assembly, PSII is composed of 1 copy each of membrane proteins PsbA, PsbB, PsbC, PsbD, PsbE, PsbF, PsbH, PsbI, PsbJ, PsbK, PsbL, PsbM, PsbT, PsbX, PsbY, Psb30/Ycf12, peripheral proteins PsbO, CyanoQ (PsbQ), PsbU, PsbV and a large number of cofactors. It forms dimeric complexes.

It localises to the cellular thylakoid membrane. Found at the monomer-monomer interface of the photosystem II (PS II) dimer, plays a role in assembly and dimerization of PSII. PSII is a light-driven water plastoquinone oxidoreductase, using light energy to abstract electrons from H(2)O, generating a proton gradient subsequently used for ATP formation. In Prochlorococcus marinus (strain MIT 9211), this protein is Photosystem II reaction center protein T.